Consider the following 215-residue polypeptide: Oligoribonuclease (215 aa).

The region spanning Leu-5–Leu-170 is the Exonuclease domain. The active site involves Tyr-127.

This sequence belongs to the oligoribonuclease family.

The protein resides in the cytoplasm. Its function is as follows. 3'-to-5' exoribonuclease specific for small oligoribonucleotides. This chain is Oligoribonuclease, found in Mycobacterium leprae (strain TN).